The chain runs to 569 residues: Potassium-transporting ATPase potassium-binding subunit (569 aa).

The next 10 helical transmembrane spans lie at 5 to 25, 65 to 85, 135 to 155, 179 to 199, 254 to 274, 286 to 306, 383 to 403, 422 to 442, 489 to 509, and 528 to 548; these read GWAE…PLGV, GYAG…YAVL, LVLT…AAAL, LYVL…LGLP, LTNL…FFAF, ALVI…YWTE, GIAV…LMVG, LLTV…AAVL, MGVA…AMAG, and GGLF…LQFF.

This sequence belongs to the KdpA family. In terms of assembly, the system is composed of three essential subunits: KdpA, KdpB and KdpC.

It is found in the cell inner membrane. Part of the high-affinity ATP-driven potassium transport (or Kdp) system, which catalyzes the hydrolysis of ATP coupled with the electrogenic transport of potassium into the cytoplasm. This subunit binds the periplasmic potassium ions and delivers the ions to the membrane domain of KdpB through an intramembrane tunnel. This Caulobacter sp. (strain K31) protein is Potassium-transporting ATPase potassium-binding subunit.